A 246-amino-acid chain; its full sequence is MPSSYDRVSKNYRQSELDKFASFTSGWWDPHGPQKPLHALNPVRLDYISKRVSLSGARVLDVGCGGGLLSEALARQGAHVTAIDLVPELIKVARLHGLESGIQVDYRIQAIEDLLAEQPAPFDAIACMEMLEHVPDPAAIVDACAHLLKPGGRLFVSTINRTLAAFMLAVVGAEYVVRLLPKGTHQYKDFIRPAELAAWLRHAGLHLEDVSGMRYEPWRNRARLTARTDINYLACAISPEASHATE.

The S-adenosyl-L-methionine site is built by Arg44, Gly63, Asp84, and Met128.

This sequence belongs to the methyltransferase superfamily. UbiG/COQ3 family.

It carries out the reaction a 3-demethylubiquinol + S-adenosyl-L-methionine = a ubiquinol + S-adenosyl-L-homocysteine + H(+). It catalyses the reaction a 3-(all-trans-polyprenyl)benzene-1,2-diol + S-adenosyl-L-methionine = a 2-methoxy-6-(all-trans-polyprenyl)phenol + S-adenosyl-L-homocysteine + H(+). The protein operates within cofactor biosynthesis; ubiquinone biosynthesis. Its function is as follows. O-methyltransferase that catalyzes the 2 O-methylation steps in the ubiquinone biosynthetic pathway. The protein is Ubiquinone biosynthesis O-methyltransferase of Xylella fastidiosa (strain Temecula1 / ATCC 700964).